The primary structure comprises 1684 residues: GRIP and coiled-coil domain-containing protein 2 (1684 aa).

Methionine 1 carries the N-acetylmethionine modification. Residues 1–22 (MEDLVQDGVASPATPGTGKSKL) are disordered. The residue at position 11 (serine 11) is a Phosphoserine. At threonine 14 the chain carries Phosphothreonine. Residues 110-1618 (VTKMGDAHKE…REKSAANLEY (1509 aa)) adopt a coiled-coil conformation. Serine 236, serine 1483, and serine 1487 each carry phosphoserine. A disordered region spans residues 1475 to 1502 (LKNEPTTRSPVSSQQSLKNLRERRNTDL). Residues 1477–1492 (NEPTTRSPVSSQQSLK) are compositionally biased toward polar residues. Residues 1574–1613 (HLNGLLRETEATNAILMEQIKLLKSEIRRLERNQEREKSA) are mediates interaction with RAB6A. Positions 1574 to 1684 (HLNGLLRETE…SYLHSWSGLR (111 aa)) are mediates interaction with RAB9A. The 51-residue stretch at 1609–1659 (REKSAANLEYLKNVLLQFIFLKPGSERERLLPVINTMLQLSPEEKGKLAAV) folds into the GRIP domain.

Homodimer. Interacts (via GRIP domain) with RAB6A (preferentially in its GTP-bound form). May interact (RAB6A-dependent) with ARL1; according to PubMed:19703403, RAB6A and ARL1 are not involved in GCC2 Golgi localization as proposed by PubMed:18243103. Interacts (probably via GRIP domain) with RAB9A (preferentially in its GTP-bound form). Interacts with CLASP1 and CLASP2; recruits both proteins to membranes of the TGN. Interacts with STX16. As to expression, ubiquitous.

It localises to the cytoplasm. The protein resides in the golgi apparatus. It is found in the trans-Golgi network membrane. Functionally, golgin which probably tethers transport vesicles to the trans-Golgi network (TGN) and regulates vesicular transport between the endosomes and the Golgi. As a RAB9A effector it is involved in recycling of the mannose 6-phosphate receptor from the late endosomes to the TGN. May also play a role in transport between the recycling endosomes and the Golgi. Required for maintenance of the Golgi structure, it is involved in the biogenesis of noncentrosomal, Golgi-associated microtubules through recruitment of CLASP1 and CLASP2. The protein is GRIP and coiled-coil domain-containing protein 2 (GCC2) of Homo sapiens (Human).